We begin with the raw amino-acid sequence, 474 residues long: MTVKTRFAPSPTGYLHVGGARTALYSWLYAKSQGGEFVLRIEDTDLERNSQEAVDAILEGMQWLGLEWNEGPYFQTQRFDRYNEMVDKLLAEDKAYKCYASKELLDEVRAEQEANKEMPRYDAEHPKIKAANEAAKDGDPCVIRFRNPKEGSVVFEDQIRGRIEISNSQMDDLIIRRTDGSPTYNFCVVVDDWDMGITHVIRGEDHINNTPRQINIYEALGAPVPTFAHCAMILGDDGAKLSKRHGAVSVMQYRDMGYLPVALNNYLVRLGWSHGDQEIFSQEEMINLFSLNAISKSASAFNTDKLLWLNNHYIKTSDPEYVAEHLQWHLDQKGIKTENGPAITDVIKLVGERCNTLVELADQIGYFYQDFDAFDADAAKKHLRGVAKQPLEVALAKVEALTEWTTENLHQVIADVCTELEIGMGKIGMPLRVAVTGGGQSPSVDAVMQLIGKERVVARIKMALAFIAEREANA.

Positions 9 to 19 (PSPTGYLHVGG) match the 'HIGH' region motif. The 'KMSKS' region motif lies at 240-244 (KLSKR). Lysine 243 contributes to the ATP binding site.

This sequence belongs to the class-I aminoacyl-tRNA synthetase family. Glutamate--tRNA ligase type 1 subfamily. In terms of assembly, monomer.

Its subcellular location is the cytoplasm. It carries out the reaction tRNA(Glu) + L-glutamate + ATP = L-glutamyl-tRNA(Glu) + AMP + diphosphate. Its function is as follows. Catalyzes the attachment of glutamate to tRNA(Glu) in a two-step reaction: glutamate is first activated by ATP to form Glu-AMP and then transferred to the acceptor end of tRNA(Glu). This chain is Glutamate--tRNA ligase, found in Vibrio vulnificus (strain CMCP6).